We begin with the raw amino-acid sequence, 97 residues long: Coiled-coil domain-containing protein 167 (97 aa).

A coiled-coil region spans residues 2 to 78 (TKKKRENLGV…LLRHENRKNT (77 aa)). Residues 78 to 95 (TLLSVAIFTVFALLYAYW) traverse the membrane as a helical segment.

The protein resides in the membrane. This Mus musculus (Mouse) protein is Coiled-coil domain-containing protein 167 (Ccdc167).